Reading from the N-terminus, the 220-residue chain is Putative O-methyltransferase Mmcs_3995 (220 aa).

S-adenosyl-L-methionine-binding positions include Val47, Glu69, 71-72, Ser77, Asp95, and Val96; that span reads GT. Asp143 is a substrate binding site. Asp145 contacts S-adenosyl-L-methionine.

It belongs to the class I-like SAM-binding methyltransferase superfamily. Cation-dependent O-methyltransferase family.

The protein is Putative O-methyltransferase Mmcs_3995 of Mycobacterium sp. (strain MCS).